A 231-amino-acid polypeptide reads, in one-letter code: NKG2-C type II integral membrane protein (231 aa).

Over residues 1 to 12 (MNKQRGTFSEVS) the composition is skewed to polar residues. Positions 1–32 (MNKQRGTFSEVSLAQDPKRQQRKPKGNKSSIS) are disordered. The Cytoplasmic portion of the chain corresponds to 1–70 (MNKQRGTFSE…CQGLLPPPEK (70 aa)). Residues 71-93 (LTAEVLGIICIVLMATVLKTIVL) form a helical; Signal-anchor for type II membrane protein membrane-spanning segment. The Extracellular segment spans residues 94 to 231 (IPFLEQNNFS…SMIYHCKHKL (138 aa)). N-linked (GlcNAc...) asparagine glycosylation occurs at asparagine 100. A C-type lectin domain is found at 116–229 (HCPEEWITYS…GSSMIYHCKH (114 aa)). 3 disulfide bridges follow: cysteine 117–cysteine 128, cysteine 145–cysteine 227, and cysteine 206–cysteine 219. Residues asparagine 149 and asparagine 178 are each glycosylated (N-linked (GlcNAc...) asparagine).

Heterodimer with KLRD1; disulfide-linked. KLRD1-KLRC2 receptor complex interacts with TYROBP homodimer; this interaction is necessary for the expression on the cell surface. KLRD1-KLRC2 receptor complex can bind with low affinity to HLA-E loaded with self-peptides derived from the signal sequence of classical MHC class Ia. In terms of tissue distribution, expressed in NK cell subsets, in particular in adaptive CD57-positive NK cells (at protein level). Expressed in terminally differentiated cytotoxic gamma-delta T cells (at protein level). Expressed in alpha-beta T cells subsets (at protein level). KLRD1-KLRC1 and KLRD1-KLRC2 are differentially expressed within NK and T cell populations, with only minor subsets expressing both receptor complexes (at protein level).

The protein localises to the cell membrane. Its function is as follows. Immune activating receptor involved in self-nonself discrimination. In complex with KLRD1 on cytotoxic lymphocyte subsets, recognizes non-classical major histocompatibility (MHC) class Ib HLA-E loaded with signal sequence-derived peptides from non-classical MHC class Ib HLA-G molecules, likely playing a role in the generation and effector functions of adaptive natural killer (NK) cells and in maternal-fetal tolerance during pregnancy. Regulates the effector functions of terminally differentiated cytotoxic lymphocyte subsets, and in particular may play a role in adaptive NK cell response to viral infection. Upon HLA-E-peptide binding, transmits intracellular signals via the adapter protein TYROBP/DAP12, triggering the phosphorylation of proximal signaling molecules and cell activation. This Homo sapiens (Human) protein is NKG2-C type II integral membrane protein (KLRC2).